The following is a 161-amino-acid chain: 3-isopropylmalate dehydratase small subunit (161 aa).

Belongs to the LeuD family. LeuD type 2 subfamily. In terms of assembly, heterodimer of LeuC and LeuD.

It catalyses the reaction (2R,3S)-3-isopropylmalate = (2S)-2-isopropylmalate. It participates in amino-acid biosynthesis; L-leucine biosynthesis; L-leucine from 3-methyl-2-oxobutanoate: step 2/4. Catalyzes the isomerization between 2-isopropylmalate and 3-isopropylmalate, via the formation of 2-isopropylmaleate. The sequence is that of 3-isopropylmalate dehydratase small subunit from Clostridium botulinum (strain Eklund 17B / Type B).